The chain runs to 2535 residues: Piezo-type mechanosensitive ion channel component 1 (2535 aa).

3 consecutive transmembrane segments (helical) span residues 13-25, 29-44, and 59-81; these read LLLP…ASLL, ALSL…LPWL, and LLRA…QICL. The N-linked (GlcNAc...) asparagine glycan is linked to asparagine 100. 5 helical membrane passes run 122-138, 193-212, 215-234, 246-266, and 308-328; these read VAPD…CLGL, LLVT…AGIA, SAFS…WWSC, LCVM…CYQT, and WPIY…TSLL. The span at 346–357 shows a compositional bias: acidic residues; the sequence is DEEHELELDQLE. Residues 346 to 377 are disordered; that stretch reads DEEHELELDQLEPEPQARGTTQGATPTTTGPD. Low complexity predominate over residues 358 to 376; the sequence is PEPQARGTTQGATPTTTGP. A glycan (N-linked (GlcNAc...) asparagine) is linked at asparagine 380. 8 helical membrane passes run 416–436, 439–454, 460–482, 510–527, 572–592, 594–614, 625–646, and 677–693; these read LILD…SIMY, WLTF…IWTV, LAML…RYVW, CLDL…WLLL, IYVK…SFAG, LVVY…LFQV, VFWW…TFQF, and LFSS…ACIL. Residue serine 749 is modified to Phosphoserine. 12 helical membrane-spanning segments follow: residues 803-814, 818-831, 846-860, 913-940, 981-996, 999-1014, 1028-1043, 1083-1104, 1140-1166, 1172-1190, 1204-1222, and 1272-1288; these read LVALYTVWVALK, VMNL…AFAL, VWTC…LYQL, GYIQ…HYRR, GLEI…IGQR, FMVI…ILTR, CLFL…LLCL, TNLI…VFSA, YLDM…TGAT, GLGY…TTLL, LILY…SLLS, and IWDS…RRVF. Residues 1325-1356 adopt a coiled-coil conformation; it reads HRQTEERSLAQLKRQMKRIRAKQEKYRQSQAS. Disordered stretches follow at residues 1345-1383 and 1556-1597; these read AKQE…RTQW and SGPV…NTRS. Over residues 1352-1365 the composition is skewed to polar residues; it reads QSQASRGQLQSTDP. Residues serine 1372 and serine 1377 each carry the phosphoserine modification. Polar residues predominate over residues 1579–1597; it reads SSMTDDTGSPLSTGYNTRS. 3 positions are modified to phosphoserine: serine 1614, serine 1618, and serine 1633. 4 helical membrane-spanning segments follow: residues 1644–1687, 1692–1707, 1716–1734, and 1767–1788; these read PELE…LNHM, AASL…WAML, FWMT…KYLF, and DSYI…SQLL. Composition is skewed to basic and acidic residues over residues 1801-1811 and 1842-1867; these read PKDHCRSSEKD and PKDH…DLKP. Positions 1801–1911 are disordered; it reads PKDHCRSSEK…GREAAGRKRL (111 aa). The span at 1868-1881 shows a compositional bias: basic residues; the sequence is QHRRHISIRFRRRK. The next 5 helical transmembrane spans lie at 1965–1984, 2005–2021, 2036–2056, 2065–2080, and 2181–2201; these read YALM…FGFW, PQAF…TMVI, AFQV…LPAV, AVAQ…YFAL, and GLII…MSLI. Cysteine 2425 and cysteine 2429 are joined by a disulfide. A helical transmembrane segment spans residues 2446-2466; sequence LGFLAGYGIVGLYVSIVLVVG.

Belongs to the PIEZO (TC 1.A.75) family. In terms of assembly, homotrimer; the homotrimer forms a propeller-shaped Piezo channel with a cation-ion conducting pore. Heterotrimeric interaction may occur between PIEZO1 and PIEZO2. Interacts with PKD2. Interacts with STOM13. Interacts with TMC1, TMC2, PCDH15 and CIB2; the interaction may be part of the MET complex. Interacts with MDFIC (via C-terminus); the interaction prolongs Piezo channel inactivation. Interacts with MDFI (via C-terminus); the interaction prolongs Piezo channel inactivation. As to expression, moderate expression in lung and kidney. Very weak expression in heart, spleen and liver.

The protein localises to the endoplasmic reticulum membrane. It localises to the endoplasmic reticulum-Golgi intermediate compartment membrane. Its subcellular location is the cell membrane. It is found in the cell projection. The protein resides in the lamellipodium membrane. It carries out the reaction K(+)(in) = K(+)(out). The catalysed reaction is Na(+)(in) = Na(+)(out). It catalyses the reaction Ca(2+)(in) = Ca(2+)(out). The enzyme catalyses Mg(2+)(in) = Mg(2+)(out). Its activity is regulated as follows. Regulated by auxillary subunits MDFIC and MDFI. Down-regulated by phosphatidylserines exposed on the cell surface. Divalent ions decrease the single-channel permeability of K(+). Functionally, pore-forming subunit of the mechanosensitive non-specific cation Piezo channel required for rapidly adapting mechanically activated (MA) currents and has a key role in sensing touch and tactile pain. Piezo channels are homotrimeric three-blade propeller-shaped structures that utilize a cap-motion and plug-and-latch mechanism to gate their ion-conducting pathways. Generates currents characterized by a linear current-voltage relationship that are sensitive to ruthenium red and gadolinium. Conductance to monovalent alkali ions is highest for K(+), intermediate for Na(+) and lowest for Li(+). Divalent ions except for Mn(2+) permeate the channel but more slowly than the monovalent ions and they also reduce K(+) currents. Plays a key role in epithelial cell adhesion by maintaining integrin activation through R-Ras recruitment to the ER, most probably in its activated state, and subsequent stimulation of calpain signaling. In inner ear hair cells, PIEZO1/2 subunits may constitute part of the mechanotransducer (MET) non-selective cation channel complex where they may act as pore-forming ion-conducting component in the complex. In the kidney, may contribute to the detection of intraluminal pressure changes and to urine flow sensing. Acts as a shear-stress sensor that promotes endothelial cell organization and alignment in the direction of blood flow through calpain activation. Plays a key role in blood vessel formation and vascular structure in both development and adult physiology. Acts as a sensor of phosphatidylserine (PS) flipping at the plasma membrane and governs morphogenesis of muscle cells. In myoblasts, flippase-mediated PS enrichment at the inner leaflet of plasma membrane triggers channel activation and Ca(2+) influx followed by Rho GTPases signal transduction, leading to assembly of cortical actomyosin fibers and myotube formation. This is Piezo-type mechanosensitive ion channel component 1 (Piezo1) from Rattus norvegicus (Rat).